Consider the following 466-residue polypeptide: Soluble pyridine nucleotide transhydrogenase (466 aa).

36–45 is a binding site for FAD; sequence ERYHNVGGGC.

This sequence belongs to the class-I pyridine nucleotide-disulfide oxidoreductase family. FAD serves as cofactor.

The protein localises to the cytoplasm. The enzyme catalyses NAD(+) + NADPH = NADH + NADP(+). Conversion of NADPH, generated by peripheral catabolic pathways, to NADH, which can enter the respiratory chain for energy generation. The sequence is that of Soluble pyridine nucleotide transhydrogenase from Salmonella paratyphi C (strain RKS4594).